The chain runs to 834 residues: Taste receptor type 1 member 2 (834 aa).

The first 19 residues, 1 to 19, serve as a signal peptide directing secretion; that stretch reads MEPRVRTVCFLFFLLRVLA. The Extracellular portion of the chain corresponds to 20–561; that stretch reads EPAKNSDFYL…SFLEWHEAAT (542 aa). Asn84, Asn292, Asn312, Asn363, Asn423, Asn482, and Asn522 each carry an N-linked (GlcNAc...) asparagine glycan. Residues 562–582 form a helical membrane-spanning segment; the sequence is IAVALLAALGFLSTLAILVIF. Over 583–597 the chain is Cytoplasmic; the sequence is WRHFETPMVRSAGGP. A helical membrane pass occupies residues 598 to 618; that stretch reads MCFLMLTLLLVAYMVVPVYVG. Topologically, residues 619 to 630 are extracellular; that stretch reads LPKVSTCLCRQA. A helical membrane pass occupies residues 631–651; it reads LFPVCFTICISCIAVRSFQIV. Over 652–676 the chain is Cytoplasmic; sequence CVFKMASRFPRAYSYWVRYQGSYVS. A helical transmembrane segment spans residues 677-697; sequence VAFITALKMVTVVISLLATGL. Over 698 to 722 the chain is Extracellular; the sequence is NPTTRTDTDDPKIMIISCNPNYRNS. Residues 723–743 form a helical membrane-spanning segment; that stretch reads LLFNTSLDLLLSVAGFSFAYM. Topologically, residues 744–755 are cytoplasmic; that stretch reads GKELPTNYNEAK. Residues 756-776 traverse the membrane as a helical segment; the sequence is FITFSMTFYFTSSVSLCTFMS. Over 777-779 the chain is Extracellular; sequence VYD. The helical transmembrane segment at 780–800 threads the bilayer; that stretch reads GVLVTIVDLLVTVFNLLAISL. Topologically, residues 801-834 are cytoplasmic; it reads GYFGPKCYMILFYPERNTPAYFNSMIQGYTMRRD.

This sequence belongs to the G-protein coupled receptor 3 family. TAS1R subfamily. In terms of assembly, forms heterodimers with TAS1R3.

The protein localises to the cell membrane. In terms of biological role, putative taste receptor. TAS1R2/TAS1R3 recognizes diverse natural and synthetic sweeteners. This Saimiri sciureus (Common squirrel monkey) protein is Taste receptor type 1 member 2 (TAS1R2).